A 159-amino-acid chain; its full sequence is Phosphopantetheine adenylyltransferase (159 aa).

Residue Thr10 coordinates substrate. ATP-binding positions include 10–11 (TF) and His18. Lys42, Met74, and Arg88 together coordinate substrate. ATP is bound by residues 89–91 (GLR), Glu99, and 124–130 (WSFISSS).

This sequence belongs to the bacterial CoaD family. In terms of assembly, homohexamer. Requires Mg(2+) as cofactor.

The protein localises to the cytoplasm. The enzyme catalyses (R)-4'-phosphopantetheine + ATP + H(+) = 3'-dephospho-CoA + diphosphate. Its pathway is cofactor biosynthesis; coenzyme A biosynthesis; CoA from (R)-pantothenate: step 4/5. Reversibly transfers an adenylyl group from ATP to 4'-phosphopantetheine, yielding dephospho-CoA (dPCoA) and pyrophosphate. This is Phosphopantetheine adenylyltransferase from Salmonella paratyphi A (strain ATCC 9150 / SARB42).